The sequence spans 391 residues: Glycosyltransferase afumC (391 aa).

Belongs to the afumC glycosyltransferase family.

It functions in the pathway secondary metabolite biosynthesis. With respect to regulation, activity is significantly decreased by addition of divalent cations such as Mg(2+), Mn(2+), Zn(2+), Ca(2+), Co(2+), Cu(2+), and Ni(2+); while Fe(2+) has little effect. Glycosyltransferase; part of the gene cluster that mediates the biosynthesis fumihopaside A, a hopane-type glucoside that enhances the thermotolerance and UV resistance of N.fumigata. The first step of fumihopaside A biosynthesis is performed by the squalene hopane cyclase afumA that catalyzes the cyclization of 3S-oxidosqualene into the hopene 21-beta-H-hopane-3-beta,22-diol. The cytochrome P450 monooxygenase afumB is responsible for both hydroxylation at C-24 and oxidations at C-30 of the afumA product. The glycosyltransferase afumC then catalyzes the glycosylation at C-24, using UDP-D-glucose as a donor, to produce fumihopaside A. AfumC is also able to accept UDP-D-galactose and UDP-D-glucuronic acid as donors to yield minor derivatives. Fumihopaside B, another minor derivative produced, is different from fumihopaside A due to the presence of a double bond between C-22 and C-29. This chain is Glycosyltransferase afumC, found in Aspergillus fumigatus (strain CBS 144.89 / FGSC A1163 / CEA10) (Neosartorya fumigata).